A 99-amino-acid polypeptide reads, in one-letter code: Small ribosomal subunit protein uS14m (99 aa).

It belongs to the universal ribosomal protein uS14 family.

The protein localises to the mitochondrion. The protein is Small ribosomal subunit protein uS14m (RPS14) of Acanthamoeba castellanii (Amoeba).